We begin with the raw amino-acid sequence, 138 residues long: Large ribosomal subunit protein bL19 (138 aa).

Belongs to the bacterial ribosomal protein bL19 family.

This protein is located at the 30S-50S ribosomal subunit interface and may play a role in the structure and function of the aminoacyl-tRNA binding site. The sequence is that of Large ribosomal subunit protein bL19 from Rickettsia africae (strain ESF-5).